Here is a 490-residue protein sequence, read N- to C-terminus: Probable glycine dehydrogenase (decarboxylating) subunit 2 (490 aa).

Residue Lys273 is modified to N6-(pyridoxal phosphate)lysine.

This sequence belongs to the GcvP family. C-terminal subunit subfamily. In terms of assembly, the glycine cleavage system is composed of four proteins: P, T, L and H. In this organism, the P 'protein' is a heterodimer of two subunits. Requires pyridoxal 5'-phosphate as cofactor.

It carries out the reaction N(6)-[(R)-lipoyl]-L-lysyl-[glycine-cleavage complex H protein] + glycine + H(+) = N(6)-[(R)-S(8)-aminomethyldihydrolipoyl]-L-lysyl-[glycine-cleavage complex H protein] + CO2. In terms of biological role, the glycine cleavage system catalyzes the degradation of glycine. The P protein binds the alpha-amino group of glycine through its pyridoxal phosphate cofactor; CO(2) is released and the remaining methylamine moiety is then transferred to the lipoamide cofactor of the H protein. This is Probable glycine dehydrogenase (decarboxylating) subunit 2 from Staphylococcus aureus (strain MSSA476).